We begin with the raw amino-acid sequence, 206 residues long: MRYTVALTGGIGSGKSTVADAFADLGITVIDADIIARQMVEPGQPALNAIAEHFGSELIAADGTLRRRALRERIFSHPEEKAWLNALLHPLIQQETQRQFQQATSPYVLWVVPLLVENRLYQKANRVLVVDVTPETQLIRTMQRDDVTREHVEHILAAQATREARLAVADDVIDNNGAPDAIASDVARLHASYLKLASQFVSQEKP.

In terms of domain architecture, DPCK spans 4-200 (TVALTGGIGS…ASYLKLASQF (197 aa)). 12–17 (GSGKST) provides a ligand contact to ATP.

This sequence belongs to the CoaE family.

The protein localises to the cytoplasm. It carries out the reaction 3'-dephospho-CoA + ATP = ADP + CoA + H(+). Its pathway is cofactor biosynthesis; coenzyme A biosynthesis; CoA from (R)-pantothenate: step 5/5. Catalyzes the phosphorylation of the 3'-hydroxyl group of dephosphocoenzyme A to form coenzyme A. This chain is Dephospho-CoA kinase, found in Salmonella typhimurium (strain LT2 / SGSC1412 / ATCC 700720).